The sequence spans 187 residues: Putative manganese efflux pump MntP (187 aa).

6 helical membrane passes run 3-23 (WLTI…VALA), 39-59 (LGFH…LLGM), 65-85 (ISAY…GRMV), 103-123 (GMTM…VGLS), 124-144 (IAML…VAGV), and 166-186 (ICGG…HTLL).

It belongs to the MntP (TC 9.B.29) family.

The protein resides in the cell inner membrane. Functionally, probably functions as a manganese efflux pump. In Geobacter sp. (strain M21), this protein is Putative manganese efflux pump MntP.